The following is a 927-amino-acid chain: F-box only protein 11 (927 aa).

The tract at residues 1–132 (MNSVRAANRR…STSTTENFGH (132 aa)) is disordered. Basic residues predominate over residues 7–16 (ANRRPRRVSR). Low complexity predominate over residues 17–27 (PRPVQQQQQQP). Residues 28–68 (PQQPPPQPPQQQPPQQQPPPPPQQQQQQQPPPPPPPPPPLP) are compositionally biased toward pro residues. A compositionally biased stretch (polar residues) spans 114–129 (PTKNSMEGASTSTTEN). The F-box domain maps to 153–199 (QYLQEKLPDEVVLKIFSYLLEQDLCRAACVCKRFSELANDPILWKRL). 19 PbH1 repeats span residues 395-417 (GACPTIKHCNISDCENVGLYITD), 418-440 (HAQGIYEDNEISNNALAGIWVKN), 441-463 (HGNPIIRRNHIHHGRDVGVFTFD), 464-486 (HGMGYFESCNIHRNRIAGFEVKA), 487-509 (YANPTVVRCEIHHGQTGGIYVHE), 510-532 (KGRGQFIENKIYANNFAGVWITS), 533-555 (NSDPTIRGNSIFNGNQGGVYIFG), 556-578 (DGRGLIEGNDIYGNALAGIQIRT), 579-601 (NSCPIVRHNKIHDGQHGGIYVHE), 602-624 (KGQGVIEENEVYSNTLAGVWVTT), 625-647 (GSTPVLRRNRIHSGKQVGVYFYD), 648-670 (NGHGVLEDNDIYNHMYSGVQIRT), 671-693 (GSNPKIRRNKIWGGQNGGILVYN), 694-716 (SGLGCIEDNEIFDNAMAGVWIKT), 717-739 (DSNPTLRRNKIHDGRDGGICIFN), 740-762 (GGRGLLEENDIFRNAQAGVLIST), 763-785 (NSHPILRKNRIFDGFAAGIEITN), 786-808 (HATATLEGNQIFNNRFGGLFLAS), and 809-830 (GVNVTMKDNKIMNNQDAIEKAV). The UBR-type zinc-finger motif lies at 833–904 (GQCLYKISSY…LSNPCTLAGE (72 aa)).

Component of the SCF(FBXO11) complex consisting of CUL1, RBX1, SKP1 and FBXO11. Interacts with CIITA. In terms of tissue distribution, isoform 5 is expressed in keratinocytes, fibroblasts and melanocytes.

Its subcellular location is the nucleus. It is found in the chromosome. It participates in protein modification; protein ubiquitination. Functionally, substrate recognition component of a SCF (SKP1-CUL1-F-box protein) E3 ubiquitin-protein ligase complex which mediates the ubiquitination and subsequent proteasomal degradation of target proteins, such as DTL/CDT2, BCL6, SNAI1 and PRDM1/BLIMP1. The SCF(FBXO11) complex mediates ubiquitination and degradation of BCL6, thereby playing a role in the germinal center B-cells terminal differentiation toward memory B-cells and plasma cells. The SCF(FBXO11) complex also mediates ubiquitination and degradation of DTL, an important step for the regulation of TGF-beta signaling, cell migration and the timing of the cell-cycle progression and exit. The SCF(FBXO11) complex also catalyzes ubiquitination and degradation of GSK3B-phosphorylated SNAI1. Binds to and neddylates phosphorylated p53/TP53, inhibiting its transcriptional activity. Plays a role in the regulatiom of erythropoiesis but not myelopoiesis or megakaryopoiesis. Mechanistically, activates erythroid genes by mediating the degradation of BAHD1, a heterochromatin-associated protein that recruits corepressors to H3K27me3 marks. Participates in macrophage cell death and inflammation in response to bacterial toxins by regulating the expression of complement 5a receptor 1/C5AR1 and IL-1beta. Acts as a critical regulator to determine the level of MHC-II by mediating the recognition of degron at the P/S/T domain of CIITA leading to its ubiquitination and subsequent degradation via the proteasome. Participates in the antiviral repsonse by initiating the activation of TBK1-IRF3-IFN-I axis. Mediates the 'Lys-63'-linked ubiquitination of TRAF3 to strengthen the interaction between TRAF3 and TBK1. The chain is F-box only protein 11 from Homo sapiens (Human).